A 216-amino-acid polypeptide reads, in one-letter code: Imidazole glycerol phosphate synthase subunit HisH (216 aa).

The Glutamine amidotransferase type-1 domain occupies 2-216 (RVAIIDYGSG…LIANFLKWKP (215 aa)). C88 (nucleophile) is an active-site residue. Catalysis depends on residues H196 and E198.

Heterodimer of HisH and HisF.

The protein resides in the cytoplasm. It catalyses the reaction 5-[(5-phospho-1-deoxy-D-ribulos-1-ylimino)methylamino]-1-(5-phospho-beta-D-ribosyl)imidazole-4-carboxamide + L-glutamine = D-erythro-1-(imidazol-4-yl)glycerol 3-phosphate + 5-amino-1-(5-phospho-beta-D-ribosyl)imidazole-4-carboxamide + L-glutamate + H(+). The catalysed reaction is L-glutamine + H2O = L-glutamate + NH4(+). It functions in the pathway amino-acid biosynthesis; L-histidine biosynthesis; L-histidine from 5-phospho-alpha-D-ribose 1-diphosphate: step 5/9. Functionally, IGPS catalyzes the conversion of PRFAR and glutamine to IGP, AICAR and glutamate. The HisH subunit catalyzes the hydrolysis of glutamine to glutamate and ammonia as part of the synthesis of IGP and AICAR. The resulting ammonia molecule is channeled to the active site of HisF. This is Imidazole glycerol phosphate synthase subunit HisH from Brucella abortus biovar 1 (strain 9-941).